A 570-amino-acid chain; its full sequence is Apyrase (570 aa).

A signal peptide spans 1-23 (MALVRFATIITVLCHLAIQDGAA). A divalent metal cation is bound by residues D43, H45, and D94. N108 carries an N-linked (GlcNAc...) asparagine glycan. Residues N126, H229, and H253 each coordinate a divalent metal cation. N287 and N326 each carry an N-linked (GlcNAc...) asparagine glycan. R367 is an AMP binding site. Residue N387 is glycosylated (N-linked (GlcNAc...) asparagine). The AMP site is built by R402 and D507. 2 N-linked (GlcNAc...) asparagine glycosylation sites follow: N552 and N555.

The protein belongs to the 5'-nucleotidase family. As to quaternary structure, interacts with human PLAT; the interaction results in PLAT activation probably via an allosteric activation mechanism. It depends on a divalent metal cation as a cofactor. As to expression, saliva (at protein level). Salivary gland (at protein level). Not detected in midgut.

It localises to the secreted. It carries out the reaction a ribonucleoside 5'-triphosphate + 2 H2O = a ribonucleoside 5'-phosphate + 2 phosphate + 2 H(+). In terms of biological role, cleaves adenosine triphosphate (ATP) and adenosine diphosphate (ADP) to adenosine monophosphate (AMP) and inorganic phosphate. Enhances fibrin degradation in the midgut blood bolus. Activates human tissue plasminogen activator (PLAT), probably via an allosteric activation mechanism. Inhibits ADP-mediated host platelet aggregation in vitro and in mosquito midgut. Inhibits host neutrophil activation in the mosquito midgut: reduces neutrophil extracellular traps formation in the presence of platelets and the formation of total cell- and mitochondrial-derived reactive oxygen species. (Microbial infection) Promotes Plasmodium berghei parasite transmission from the mammalian host to the mosquito probably by reducing the blood bolus viscosity. Facilitates sporozoite transmission from the mosquito to the mammalian host during blood feeding. The protein is Apyrase of Anopheles gambiae (African malaria mosquito).